Here is a 584-residue protein sequence, read N- to C-terminus: Proline--tRNA ligase (584 aa).

The interval 242–261 (APPASNPEERPATQVHDTPD) is disordered.

It belongs to the class-II aminoacyl-tRNA synthetase family. ProS type 1 subfamily. In terms of assembly, homodimer.

The protein localises to the cytoplasm. It carries out the reaction tRNA(Pro) + L-proline + ATP = L-prolyl-tRNA(Pro) + AMP + diphosphate. Functionally, catalyzes the attachment of proline to tRNA(Pro) in a two-step reaction: proline is first activated by ATP to form Pro-AMP and then transferred to the acceptor end of tRNA(Pro). As ProRS can inadvertently accommodate and process non-cognate amino acids such as alanine and cysteine, to avoid such errors it has two additional distinct editing activities against alanine. One activity is designated as 'pretransfer' editing and involves the tRNA(Pro)-independent hydrolysis of activated Ala-AMP. The other activity is designated 'posttransfer' editing and involves deacylation of mischarged Ala-tRNA(Pro). The misacylated Cys-tRNA(Pro) is not edited by ProRS. The sequence is that of Proline--tRNA ligase from Salinispora arenicola (strain CNS-205).